The sequence spans 935 residues: Phosphoenolpyruvate carboxylase (935 aa).

Residues His-161 and Lys-593 contribute to the active site.

The protein belongs to the PEPCase type 1 family. The cofactor is Mg(2+).

The catalysed reaction is oxaloacetate + phosphate = phosphoenolpyruvate + hydrogencarbonate. In terms of biological role, forms oxaloacetate, a four-carbon dicarboxylic acid source for the tricarboxylic acid cycle. This chain is Phosphoenolpyruvate carboxylase, found in Mycobacterium avium (strain 104).